Consider the following 196-residue polypeptide: Phosphoheptose isomerase (196 aa).

The region spanning 33–192 (LIQSLKNGGK…ESECGENGNT (160 aa)) is the SIS domain. 48 to 50 (NGG) is a substrate binding site. Zn(2+) contacts are provided by histidine 57 and glutamate 61. Substrate-binding positions include glutamate 61, 90–91 (ND), 116–118 (STS), serine 121, and glutamine 168. Zn(2+) is bound by residues glutamine 168 and histidine 176.

Belongs to the SIS family. GmhA subfamily. In terms of assembly, homotetramer. Zn(2+) is required as a cofactor.

The protein resides in the cytoplasm. It carries out the reaction 2 D-sedoheptulose 7-phosphate = D-glycero-alpha-D-manno-heptose 7-phosphate + D-glycero-beta-D-manno-heptose 7-phosphate. Its pathway is carbohydrate biosynthesis; D-glycero-D-manno-heptose 7-phosphate biosynthesis; D-glycero-alpha-D-manno-heptose 7-phosphate and D-glycero-beta-D-manno-heptose 7-phosphate from sedoheptulose 7-phosphate: step 1/1. Functionally, catalyzes the isomerization of sedoheptulose 7-phosphate in D-glycero-D-manno-heptose 7-phosphate. The polypeptide is Phosphoheptose isomerase (Helicobacter hepaticus (strain ATCC 51449 / 3B1)).